We begin with the raw amino-acid sequence, 40 residues long: Bomanin Short 6 (40 aa).

The signal sequence occupies residues Met1–Ala18. The propeptide at Asn19 to Pro23 is removed by a dipeptidylpeptidase. Cys32 and Cys35 form a disulfide bridge.

It belongs to the bomanin family.

It is found in the secreted. Its function is as follows. Secreted immune-induced peptide induced by Toll signaling. Has a role in resistance to bacterial and fungal infections. The strength of antimicrobial activity appears to correlate with the overall level of expression. The polypeptide is Bomanin Short 6 (Drosophila melanogaster (Fruit fly)).